A 179-amino-acid polypeptide reads, in one-letter code: Signal peptidase complex catalytic subunit SEC11A (179 aa).

Residues 1–16 are Cytoplasmic-facing; sequence MLSLDFLDDVRRMNKR. The chain crosses the membrane as a helical; Signal-anchor for type II membrane protein span at residues 17-36; the sequence is QLYYQVLNFGMIVSSALMIW. Residues 37–179 are Lumenal-facing; it reads KGLMLITGSE…LGLFVLVHRE (143 aa). Residues Ser56, His96, and Asp122 each act as charge relay system in the active site. A C-terminal short (CTS) helix region spans residues 165 to 176; the sequence is AVLFLLGLFVLV.

This sequence belongs to the peptidase S26B family. As to quaternary structure, component of the signal peptidase complex paralog A (SPC-A) composed of a catalytic subunit SEC11A and three accessory subunits SPCS1, SPCS2 and SPCS3. Within the complex, interacts with SPCS2 and SPCS3. The complex induces a local thinning of the ER membrane which is used to measure the length of the signal peptide (SP) h-region of protein substrates. This ensures the selectivity of the complex towards h-regions shorter than 18-20 amino acids.

It is found in the endoplasmic reticulum membrane. The catalysed reaction is Cleavage of hydrophobic, N-terminal signal or leader sequences from secreted and periplasmic proteins.. Its function is as follows. Catalytic component of the signal peptidase complex (SPC) which catalyzes the cleavage of N-terminal signal sequences from nascent proteins as they are translocated into the lumen of the endoplasmic reticulum. Specifically cleaves N-terminal signal peptides that contain a hydrophobic alpha-helix (h-region) shorter than 18-20 amino acids. The polypeptide is Signal peptidase complex catalytic subunit SEC11A (Sec11a) (Rattus norvegicus (Rat)).